A 652-amino-acid polypeptide reads, in one-letter code: ATP-dependent zinc metalloprotease FtsH 1 (652 aa).

Topologically, residues 1–9 (MSDNKWLRN) are cytoplasmic. A helical transmembrane segment spans residues 10–30 (GFVWMILIIAAIAVWVTFVQG). The Extracellular segment spans residues 31–110 (GRGGATITTQ…QTHRASQWGN (80 aa)). Residues 111 to 131 (VLGTLTFLLPTLFLIGVIIFM) traverse the membrane as a helical segment. At 132–652 (MRQAQGTNNQ…VPHIKPQPAS (521 aa)) the chain is on the cytoplasmic side. 203 to 210 (GPPGTGKT) lines the ATP pocket. A Zn(2+)-binding site is contributed by His425. Glu426 is a catalytic residue. The Zn(2+) site is built by His429 and Asp501. A disordered region spans residues 623–652 (IATPETARPDSPSEARPAAPVPHIKPQPAS). The segment covering 641 to 652 (APVPHIKPQPAS) has biased composition (pro residues).

In the central section; belongs to the AAA ATPase family. The protein in the C-terminal section; belongs to the peptidase M41 family. In terms of assembly, homohexamer. Zn(2+) serves as cofactor.

The protein localises to the cell membrane. Its function is as follows. Acts as a processive, ATP-dependent zinc metallopeptidase for both cytoplasmic and membrane proteins. Plays a role in the quality control of integral membrane proteins. The polypeptide is ATP-dependent zinc metalloprotease FtsH 1 (Thermomicrobium roseum (strain ATCC 27502 / DSM 5159 / P-2)).